Consider the following 216-residue polypeptide: MPGFIADPAEVPPFLLAGGRSSRMGVNKAFVSLGGEKLLTRIATRIGQRQTIPVALNADADWPDTEGLPLVPDTIPGKLGPLAGVLTAMRYTATHHPHASHLVTVPIDSPFFPIDLVAQLAEPIEGRNDIAIATSLGRDHPVFGLWPVSIADDLESWLLADEKRRVRDFLARHLVRTVDFPTIETAIGPLDPFFNINRPDDLIDAEKWLAALERTP.

Residues 16–18, Lys28, Asn57, Asp73, and Asp108 each bind GTP; that span reads LAG. Asp108 provides a ligand contact to Mg(2+).

This sequence belongs to the MobA family. Monomer. Mg(2+) is required as a cofactor.

It localises to the cytoplasm. It catalyses the reaction Mo-molybdopterin + GTP + H(+) = Mo-molybdopterin guanine dinucleotide + diphosphate. Transfers a GMP moiety from GTP to Mo-molybdopterin (Mo-MPT) cofactor (Moco or molybdenum cofactor) to form Mo-molybdopterin guanine dinucleotide (Mo-MGD) cofactor. This Rhizobium rhizogenes (strain K84 / ATCC BAA-868) (Agrobacterium radiobacter) protein is Molybdenum cofactor guanylyltransferase.